Reading from the N-terminus, the 540-residue chain is MAAKDVKFGNDARVKMLRGVNVLADAVKVTLGPKGRNVVLDKSFGAPTITKDGVSVAREIELEDKFENMGAQMVKEVASKANDAAGDGTTTATVLAQSIITEGLKAVAAGMNPMDLKRGIDKAVAAAVEELKALSVPCSDSKAIAQVGTISANSDETVGKLIAEAMDKVGKEGVITVEDGTGLQDELDVVEGMQFDRGYLSPYFINKPETGAVELDSPFILLADKKISNIRELLPVLEAVAKAGKPLLIIAEDVEGEALATLVVNTMRGIVKVAAVKAPGFGDRRKAMLQDIATLTAGTVISEEIGMELEKATLEDLGQAKRVVINKDTTTIIDGVGEEVAIQGRVTQIRQQIEEATSDYDREKLQERVAKLAGGVAVIKVGAATEVEMKEKKARVEDALHATRAAVEEGVVAGGGVALIRVASKITELKGQNEDQNVGIKVALRAMEAPLRQIVLNCGEEPSVVANTVKSGDGNYGYNAATEEYGNMIDMGILDPTKVTRSALQYAASVAGLMITTECMVTDLPKADAPDLGGAGGMGG.

ATP is bound by residues 30 to 33, K51, 87 to 91, G415, 479 to 481, and D495; these read TLGP, DGTTT, and NAA.

The protein belongs to the chaperonin (HSP60) family. As to quaternary structure, forms a cylinder of 14 subunits composed of two heptameric rings stacked back-to-back. Interacts with the co-chaperonin GroES.

The protein localises to the cytoplasm. It carries out the reaction ATP + H2O + a folded polypeptide = ADP + phosphate + an unfolded polypeptide.. Together with its co-chaperonin GroES, plays an essential role in assisting protein folding. The GroEL-GroES system forms a nano-cage that allows encapsulation of the non-native substrate proteins and provides a physical environment optimized to promote and accelerate protein folding. The polypeptide is Chaperonin GroEL (Pluralibacter gergoviae (Enterobacter gergoviae)).